The primary structure comprises 135 residues: MNRLQLLSKGLRLIHKMSEEALAGVPLVHISPEGIFKYVMINVIDGGDASKAVIRGFADCTWHADIFEREEDVFKKLGLRAECPGGGRIEHNPDKKYLKVYGYSQGFGKADHAQTKRILATKYPDYTIEISDEGY.

K37 contacts substrate. H63 acts as the Proton acceptor in catalysis. 104 to 106 contributes to the substrate binding site; that stretch reads SQG.

The protein belongs to the janus family.

In terms of biological role, janA and janB regulate somatic sex differentiation. This is Sex-regulated protein janus-A (janA) from Drosophila mauritiana (Fruit fly).